A 559-amino-acid polypeptide reads, in one-letter code: Potassium-transporting ATPase potassium-binding subunit (559 aa).

Helical transmembrane passes span 5 to 25 (GFLL…PLGM), 63 to 83 (LLAI…LLML), 131 to 151 (VGLT…VFAL), 173 to 193 (ITLW…IQQG), 254 to 274 (VQML…GEVV), 282 to 302 (AILW…MWAE), 327 to 347 (FGIL…CGAV), 356 to 376 (ALGG…FGGV), 379 to 399 (GLYG…LMVG), 416 to 436 (MIAL…ALAM), 483 to 503 (LLLA…VMAI), and 525 to 545 (ALFI…TFIP).

This sequence belongs to the KdpA family. As to quaternary structure, the system is composed of three essential subunits: KdpA, KdpB and KdpC.

The protein resides in the cell inner membrane. Its function is as follows. Part of the high-affinity ATP-driven potassium transport (or Kdp) system, which catalyzes the hydrolysis of ATP coupled with the electrogenic transport of potassium into the cytoplasm. This subunit binds the periplasmic potassium ions and delivers the ions to the membrane domain of KdpB through an intramembrane tunnel. The polypeptide is Potassium-transporting ATPase potassium-binding subunit (Klebsiella pneumoniae subsp. pneumoniae (strain ATCC 700721 / MGH 78578)).